Reading from the N-terminus, the 200-residue chain is Recombination protein RecR (200 aa).

The C4-type zinc finger occupies 58–73 (CSICGNITEDDPCPIC). Residues 81-177 (SQILVVEQSQ…KVTRLAHGLS (97 aa)) form the Toprim domain.

The protein belongs to the RecR family.

May play a role in DNA repair. It seems to be involved in an RecBC-independent recombinational process of DNA repair. It may act with RecF and RecO. This chain is Recombination protein RecR, found in Limosilactobacillus reuteri (strain DSM 20016) (Lactobacillus reuteri).